The chain runs to 520 residues: MSDDRKAIKRALISVYDKTGLEDLAQALHRENVEIVSTGSTAAKIAELGIPVTPVEELTGFPECLEGRVKTLHPKVHAGILADTRKEDHLRQLKELEVAPFQLVVVNLYPFAETVASGADFDACVEQIDIGGPSMVRAAAKNHPSVAVVVSPNRYEDVQEALKTGGFSRAERTKLAAEAFRHTATYDVTVATWMSEQLAAEDSETEFPGWIGTTNTLSRSLRYGENPHQSAALYVGNTRGLAQAKQFHGKEMSYNNYTDSDAAWRAAWDHERPCVAIIKHANPCGIAVSDESIAAAHREAHACDSVSAFGGVIASNREVSVEMANQVAEIFTEVIIAPSYEEGAVEILSQKKNIRILQAEAPVRKGFESREISGGLLVQERDLIHAEGDNSANWTLAAGSAVSPEVLKDLEFAWTAVRSVKSNAILLAKNGATVGVGMGQVNRVDSARLAVDRAGAERATGSVAASDAFFPFADGFEVLAEAGITAVVQPGGSIRDNEVIEAANKAGVTMYLTGARHFAH.

The MGS-like domain maps to 1–150 (MSDDRKAIKR…KNHPSVAVVV (150 aa)).

This sequence belongs to the PurH family.

It carries out the reaction (6R)-10-formyltetrahydrofolate + 5-amino-1-(5-phospho-beta-D-ribosyl)imidazole-4-carboxamide = 5-formamido-1-(5-phospho-D-ribosyl)imidazole-4-carboxamide + (6S)-5,6,7,8-tetrahydrofolate. It catalyses the reaction IMP + H2O = 5-formamido-1-(5-phospho-D-ribosyl)imidazole-4-carboxamide. Its pathway is purine metabolism; IMP biosynthesis via de novo pathway; 5-formamido-1-(5-phospho-D-ribosyl)imidazole-4-carboxamide from 5-amino-1-(5-phospho-D-ribosyl)imidazole-4-carboxamide (10-formyl THF route): step 1/1. The protein operates within purine metabolism; IMP biosynthesis via de novo pathway; IMP from 5-formamido-1-(5-phospho-D-ribosyl)imidazole-4-carboxamide: step 1/1. This chain is Bifunctional purine biosynthesis protein PurH, found in Corynebacterium glutamicum (strain ATCC 13032 / DSM 20300 / JCM 1318 / BCRC 11384 / CCUG 27702 / LMG 3730 / NBRC 12168 / NCIMB 10025 / NRRL B-2784 / 534).